The following is a 478-amino-acid chain: UDP-N-acetylmuramate--L-alanine ligase (478 aa).

122–128 is a binding site for ATP; it reads GTHGKTT.

The protein belongs to the MurCDEF family.

Its subcellular location is the cytoplasm. The catalysed reaction is UDP-N-acetyl-alpha-D-muramate + L-alanine + ATP = UDP-N-acetyl-alpha-D-muramoyl-L-alanine + ADP + phosphate + H(+). The protein operates within cell wall biogenesis; peptidoglycan biosynthesis. In terms of biological role, cell wall formation. This Stenotrophomonas maltophilia (strain K279a) protein is UDP-N-acetylmuramate--L-alanine ligase.